A 101-amino-acid polypeptide reads, in one-letter code: MIPGEYDIQPGDIELNAGRRTLALSVANTGDRPIQVGSHYHFFEVNDALAFDRPATRGMRLNIAAGTAVRFEPGQSREVELVEIGGGRRVYGFAGRVMGDL.

The protein belongs to the urease beta subunit family. In terms of assembly, heterotrimer of UreA (gamma), UreB (beta) and UreC (alpha) subunits. Three heterotrimers associate to form the active enzyme.

It is found in the cytoplasm. It catalyses the reaction urea + 2 H2O + H(+) = hydrogencarbonate + 2 NH4(+). The protein operates within nitrogen metabolism; urea degradation; CO(2) and NH(3) from urea (urease route): step 1/1. This is Urease subunit beta from Pseudomonas aeruginosa (strain LESB58).